The chain runs to 74 residues: O-conotoxin GeXXXIA (74 aa).

Positions 1 to 22 are cleaved as a signal peptide; it reads MKLTCVLIITVLFLTACQLTTA. Positions 23-33 are excised as a propeptide; the sequence is VTYSRGEHKHR.

It belongs to the conotoxin O1 superfamily. In terms of assembly, homodimer; disulfide-linked. Post-translationally, may contain 2 intrachain disulfide bonds and probably one interchain disulfide bond forming the homodimer. In terms of processing, the disulfide pairing is not important for activity towards the different nAChR subtypes, since this peptide without disulfide bond or with different disulfide bonds shows the same activity. As to expression, expressed by the venom duct.

The protein resides in the secreted. The activity of this natural homodimer has not been tested due to low abundance. The synthetic linear peptide has been refolded, giving 4 different monomeric isomers (m1 to m4) with 2 disulfide bonds each. All isomers potently inhibit rat alpha-1-beta-1-delta-epsilon/CHRNA1-CHRNB1-CHRND-CHRNE and human alpha-9-alpha-10/CHRNA9-CHRNA10 nicotinic acetylcholine receptors (nAChR). In addition, they show a modest inhibition at human alpha-3-beta-2/CHRNA3-CHRNB2, alpha-3-beta-4/CHRNA3-CHRNB4, alpha-7/CHRNA7, and alpha-4-beta-4/CHRNA4-CHRNB4. The synthetic monomer peptide without disulfide bonds shows a potent activity on alpha-9-alpha-10/CHRNA9 and CHRNA10 (IC(50)=16.2 nM). This linear peptide does not act as a competitive antagonist, or as a channel pore blocker of nAChR. The protein is O-conotoxin GeXXXIA of Conus generalis (General cone).